We begin with the raw amino-acid sequence, 406 residues long: Tryptophan synthase beta chain (406 aa).

K99 bears the N6-(pyridoxal phosphate)lysine mark.

This sequence belongs to the TrpB family. Tetramer of two alpha and two beta chains. Requires pyridoxal 5'-phosphate as cofactor.

It carries out the reaction (1S,2R)-1-C-(indol-3-yl)glycerol 3-phosphate + L-serine = D-glyceraldehyde 3-phosphate + L-tryptophan + H2O. The protein operates within amino-acid biosynthesis; L-tryptophan biosynthesis; L-tryptophan from chorismate: step 5/5. In terms of biological role, the beta subunit is responsible for the synthesis of L-tryptophan from indole and L-serine. The chain is Tryptophan synthase beta chain from Rhizobium meliloti (strain 1021) (Ensifer meliloti).